The following is a 127-amino-acid chain: Large ribosomal subunit protein bL12 (127 aa).

It belongs to the bacterial ribosomal protein bL12 family. In terms of assembly, homodimer. Part of the ribosomal stalk of the 50S ribosomal subunit. Forms a multimeric L10(L12)X complex, where L10 forms an elongated spine to which 2 to 4 L12 dimers bind in a sequential fashion. Binds GTP-bound translation factors.

Forms part of the ribosomal stalk which helps the ribosome interact with GTP-bound translation factors. Is thus essential for accurate translation. This chain is Large ribosomal subunit protein bL12, found in Sinorhizobium fredii (strain NBRC 101917 / NGR234).